Here is a 180-residue protein sequence, read N- to C-terminus: MSFKGTTVIAIRRGGKTAVAADGQVTFGYTVLKSNAVKIRKLVNGRILAGFAGSTSDAITLFEKFEEKVKAREDGIIDIKRAAVELAKDWRSDKILHKLEAMMLVADSENILLISGTGDVVEPEEDVISIGSGGNYAYSAALAYMENKKLSAADIAFKSLKVAAKVCIYTNSNIVLEEIS.

Threonine 6 is an active-site residue. The Na(+) site is built by alanine 164, cysteine 167, and threonine 170.

The protein belongs to the peptidase T1B family. HslV subfamily. A double ring-shaped homohexamer of HslV is capped on each side by a ring-shaped HslU homohexamer. The assembly of the HslU/HslV complex is dependent on binding of ATP.

The protein localises to the cytoplasm. It carries out the reaction ATP-dependent cleavage of peptide bonds with broad specificity.. Allosterically activated by HslU binding. Functionally, protease subunit of a proteasome-like degradation complex believed to be a general protein degrading machinery. The chain is ATP-dependent protease subunit HslV from Borrelia hermsii (strain HS1 / DAH).